The chain runs to 207 residues: Fibroblast growth factor 18 (207 aa).

A signal peptide spans 1–27; the sequence is MYSAPSACTCLCLHFLLLCFQVQVLVA. Asn-39 carries an N-linked (GlcNAc...) asparagine glycan. Cys-109 and Cys-127 are disulfide-bonded. N-linked (GlcNAc...) asparagine glycosylation is present at Asn-137. The disordered stretch occupies residues 157–186; the sequence is GRPRKGPKTRENQQDVHFMKRYPKGQPELQ. Over residues 164–174 the composition is skewed to basic and acidic residues; that stretch reads KTRENQQDVHF.

Belongs to the heparin-binding growth factors family. In terms of assembly, interacts with FGFR3 and FGFR4.

It localises to the secreted. In terms of biological role, plays an important role in the regulation of cell proliferation, cell differentiation and cell migration. Required for normal ossification and bone development. Stimulates hepatic and intestinal proliferation. This chain is Fibroblast growth factor 18 (FGF18), found in Homo sapiens (Human).